Reading from the N-terminus, the 247-residue chain is Coproheme decarboxylase (247 aa).

Fe-coproporphyrin III is bound by residues Arg-129, Tyr-143–Lys-147, His-170, Gln-183, and Ser-221. Tyr-143 is a catalytic residue.

This sequence belongs to the ChdC family. Type 1 subfamily. The cofactor is Fe-coproporphyrin III.

The catalysed reaction is Fe-coproporphyrin III + 2 H2O2 + 2 H(+) = heme b + 2 CO2 + 4 H2O. The enzyme catalyses Fe-coproporphyrin III + H2O2 + H(+) = harderoheme III + CO2 + 2 H2O. It catalyses the reaction harderoheme III + H2O2 + H(+) = heme b + CO2 + 2 H2O. It participates in porphyrin-containing compound metabolism; protoheme biosynthesis. Its function is as follows. Involved in coproporphyrin-dependent heme b biosynthesis. Catalyzes the decarboxylation of Fe-coproporphyrin III (coproheme) to heme b (protoheme IX), the last step of the pathway. The reaction occurs in a stepwise manner with a three-propionate intermediate. The chain is Coproheme decarboxylase from Bacillus cereus (strain B4264).